We begin with the raw amino-acid sequence, 365 residues long: Pre-small/secreted glycoprotein (365 aa).

Residues 1-32 (MGASGILQLPRERFRKTSFFVWVIILFHKVFS) form the signal peptide. An N-linked (GlcNAc...) asparagine; by host glycan is attached at Asn-40. Cystine bridges form between Cys-108–Cys-135 and Cys-121–Cys-147. Asn-204, Asn-228, Asn-257, and Asn-268 each carry an N-linked (GlcNAc...) asparagine; by host glycan.

Belongs to the filoviruses glycoprotein family. In terms of assembly, homodimer; disulfide-linked. The homodimers are linked by two disulfide bonds in a parallel orientation. Monomer. In terms of processing, this precursor is processed into mature sGP and delta-peptide by host furin or furin-like proteases. The cleavage site corresponds to the furin optimal cleavage sequence [KR]-X-[KR]-R. N-glycosylated. Post-translationally, O-glycosylated.

It localises to the secreted. Functionally, seems to possess an anti-inflammatory activity as it can reverse the barrier-decreasing effects of TNF alpha. Might therefore contribute to the lack of inflammatory reaction seen during infection in spite the of extensive necrosis and massive virus production. Does not seem to be involved in activation of primary macrophages. Does not seem to interact specifically with neutrophils. Viroporin that permeabilizes mammalian cell plasma membranes. It acts by altering permeation of ionic compounds and small molecules. This activity may lead to viral enterotoxic activity. This is Pre-small/secreted glycoprotein (GP) from Epomops franqueti (Franquet's epauletted fruit bat).